The primary structure comprises 457 residues: Zinc finger protein ZPR1 (457 aa).

Residues 1-13 show a composition bias toward polar residues; the sequence is MSTVSDPNSSNPP. Residues 1–21 are disordered; it reads MSTVSDPNSSNPPESAGNIRP. C4-type zinc fingers lie at residues 43-75 and 261-293; these read CMNC…CDHC and CPSC…CGAC. A disordered region spans residues 414–457; sequence VQSLSDDDSEPDDKLTVERYDRSYEDNEDLGLNDMKTEGYEEKA. Composition is skewed to basic and acidic residues over residues 425-438 and 448-457; these read DDKL…RSYE and MKTEGYEEKA.

It belongs to the ZPR1 family.

Its function is as follows. Might mediate EGFR and FGFR signal transduction cascades required for lumen formation in tracheal cells. The protein is Zinc finger protein ZPR1 of Drosophila melanogaster (Fruit fly).